A 276-amino-acid chain; its full sequence is Diaminopimelate epimerase (276 aa).

Substrate contacts are provided by asparagine 13, glutamine 46, and asparagine 66. Cysteine 75 serves as the catalytic Proton donor. Residues glycine 76–asparagine 77, asparagine 159, asparagine 192, and glutamate 210–arginine 211 contribute to the substrate site. Cysteine 219 acts as the Proton acceptor in catalysis. Glycine 220–serine 221 contacts substrate.

This sequence belongs to the diaminopimelate epimerase family. Homodimer.

It is found in the cytoplasm. It carries out the reaction (2S,6S)-2,6-diaminopimelate = meso-2,6-diaminopimelate. The protein operates within amino-acid biosynthesis; L-lysine biosynthesis via DAP pathway; DL-2,6-diaminopimelate from LL-2,6-diaminopimelate: step 1/1. In terms of biological role, catalyzes the stereoinversion of LL-2,6-diaminopimelate (L,L-DAP) to meso-diaminopimelate (meso-DAP), a precursor of L-lysine and an essential component of the bacterial peptidoglycan. The sequence is that of Diaminopimelate epimerase from Vibrio parahaemolyticus serotype O3:K6 (strain RIMD 2210633).